Reading from the N-terminus, the 122-residue chain is Large ribosomal subunit protein bL12 (122 aa).

Belongs to the bacterial ribosomal protein bL12 family. Homodimer. Part of the ribosomal stalk of the 50S ribosomal subunit. Forms a multimeric L10(L12)X complex, where L10 forms an elongated spine to which 2 to 4 L12 dimers bind in a sequential fashion. Binds GTP-bound translation factors.

Its function is as follows. Forms part of the ribosomal stalk which helps the ribosome interact with GTP-bound translation factors. Is thus essential for accurate translation. This Aliivibrio fischeri (strain ATCC 700601 / ES114) (Vibrio fischeri) protein is Large ribosomal subunit protein bL12.